A 344-amino-acid chain; its full sequence is UDP-N-acetylenolpyruvoylglucosamine reductase (344 aa).

Residues 17 to 187 (VDYACSELIS…TGVGIKLAKK (171 aa)) form the FAD-binding PCMH-type domain. R163 is a catalytic residue. S233 functions as the Proton donor in the catalytic mechanism. Residue E329 is part of the active site.

It belongs to the MurB family. Requires FAD as cofactor.

It localises to the cytoplasm. It carries out the reaction UDP-N-acetyl-alpha-D-muramate + NADP(+) = UDP-N-acetyl-3-O-(1-carboxyvinyl)-alpha-D-glucosamine + NADPH + H(+). Its pathway is cell wall biogenesis; peptidoglycan biosynthesis. Functionally, cell wall formation. This Shewanella sediminis (strain HAW-EB3) protein is UDP-N-acetylenolpyruvoylglucosamine reductase.